The chain runs to 378 residues: tRNA-specific 2-thiouridylase MnmA (378 aa).

Residues 27–34 and leucine 53 contribute to the ATP site; that span reads AMSGGVDS. The Nucleophile role is filled by cysteine 121. An intrachain disulfide couples cysteine 121 to cysteine 218. An ATP-binding site is contributed by glycine 145. Positions 168-170 are interaction with tRNA; it reads RDQ. Cysteine 218 functions as the Cysteine persulfide intermediate in the catalytic mechanism.

The protein belongs to the MnmA/TRMU family.

It is found in the cytoplasm. The enzyme catalyses S-sulfanyl-L-cysteinyl-[protein] + uridine(34) in tRNA + AH2 + ATP = 2-thiouridine(34) in tRNA + L-cysteinyl-[protein] + A + AMP + diphosphate + H(+). Functionally, catalyzes the 2-thiolation of uridine at the wobble position (U34) of tRNA, leading to the formation of s(2)U34. The chain is tRNA-specific 2-thiouridylase MnmA from Rhizorhabdus wittichii (strain DSM 6014 / CCUG 31198 / JCM 15750 / NBRC 105917 / EY 4224 / RW1) (Sphingomonas wittichii).